The following is a 292-amino-acid chain: Protease HtpX (292 aa).

2 consecutive transmembrane segments (helical) span residues 4 to 24 (IALF…VLSL) and 34 to 54 (GLMI…LLMS). Position 139 (His-139) interacts with Zn(2+). Residue Glu-140 is part of the active site. Position 143 (His-143) interacts with Zn(2+). The next 2 membrane-spanning stretches (helical) occupy residues 158 to 178 (IVNT…AGFL) and 192 to 212 (MIYF…ASII). Glu-221 contacts Zn(2+).

The protein belongs to the peptidase M48B family. The cofactor is Zn(2+).

It localises to the cell inner membrane. The sequence is that of Protease HtpX from Serratia proteamaculans (strain 568).